The sequence spans 181 residues: Bifunctional protein PyrR (181 aa).

Positions 100–112 (VVLVDDVIYTGRT) match the PRPP-binding motif.

Belongs to the purine/pyrimidine phosphoribosyltransferase family. PyrR subfamily. In terms of assembly, homodimer and homohexamer; in equilibrium.

The enzyme catalyses UMP + diphosphate = 5-phospho-alpha-D-ribose 1-diphosphate + uracil. Functionally, regulates transcriptional attenuation of the pyrimidine nucleotide (pyr) operon by binding in a uridine-dependent manner to specific sites on pyr mRNA. This disrupts an antiterminator hairpin in the RNA and favors formation of a downstream transcription terminator, leading to a reduced expression of downstream genes. Also displays a weak uracil phosphoribosyltransferase activity which is not physiologically significant. This is Bifunctional protein PyrR from Pelotomaculum thermopropionicum (strain DSM 13744 / JCM 10971 / SI).